The primary structure comprises 570 residues: Glutamate--tRNA ligase, chloroplastic/mitochondrial (570 aa).

A chloroplast and mitochondrion-targeting transit peptide spans 1 to 39 (MASLVYGTPWLRVRSLPELAPAFLRRRQSSLFYCSRRSF). 57–59 (RFA) is a binding site for L-glutamate. Residues 60–70 (PSPTGNLHVGG) carry the 'HIGH' region motif. Position 67 (H67) interacts with ATP. L-glutamate-binding positions include E93, 245-249 (YNFCV), and R263. ATP contacts are provided by residues E266 and 301–305 (KLSKR). A 'KMSKS' region motif is present at residues 301-305 (KLSKR).

It belongs to the class-I aminoacyl-tRNA synthetase family. Glutamate--tRNA ligase type 1 subfamily.

The protein localises to the plastid. It localises to the chloroplast. The protein resides in the mitochondrion. The enzyme catalyses tRNA(Glu) + L-glutamate + ATP = L-glutamyl-tRNA(Glu) + AMP + diphosphate. Functionally, catalyzes the attachment of glutamate to tRNA(Glu) in a two-step reaction: glutamate is first activated by ATP to form Glu-AMP and then transferred to the acceptor end of tRNA(Glu). This Arabidopsis thaliana (Mouse-ear cress) protein is Glutamate--tRNA ligase, chloroplastic/mitochondrial.